Here is a 282-residue protein sequence, read N- to C-terminus: Pantothenate synthetase (282 aa).

30–37 lines the ATP pocket; the sequence is MGALHQGH. The active-site Proton donor is the H37. Q61 serves as a coordination point for (R)-pantoate. A beta-alanine-binding site is contributed by Q61. Residue 149 to 152 participates in ATP binding; that stretch reads GEKD. Position 155 (Q155) interacts with (R)-pantoate. Residues L178 and 186–189 each bind ATP; that span reads MSSR.

It belongs to the pantothenate synthetase family. In terms of assembly, homodimer.

It localises to the cytoplasm. The catalysed reaction is (R)-pantoate + beta-alanine + ATP = (R)-pantothenate + AMP + diphosphate + H(+). It functions in the pathway cofactor biosynthesis; (R)-pantothenate biosynthesis; (R)-pantothenate from (R)-pantoate and beta-alanine: step 1/1. Its function is as follows. Catalyzes the condensation of pantoate with beta-alanine in an ATP-dependent reaction via a pantoyl-adenylate intermediate. This Flavobacterium psychrophilum (strain ATCC 49511 / DSM 21280 / CIP 103535 / JIP02/86) protein is Pantothenate synthetase.